Consider the following 234-residue polypeptide: Large ribosomal subunit protein uL1 (234 aa).

Belongs to the universal ribosomal protein uL1 family. As to quaternary structure, part of the 50S ribosomal subunit.

Binds directly to 23S rRNA. The L1 stalk is quite mobile in the ribosome, and is involved in E site tRNA release. In terms of biological role, protein L1 is also a translational repressor protein, it controls the translation of the L11 operon by binding to its mRNA. In Tolumonas auensis (strain DSM 9187 / NBRC 110442 / TA 4), this protein is Large ribosomal subunit protein uL1.